A 1009-amino-acid chain; its full sequence is Lateral signaling target protein 2 homolog (1009 aa).

Disordered regions lie at residues 313–460 (PVGS…EEQL), 497–629 (ASED…KRCS), and 777–905 (MQRN…TATA). Composition is skewed to low complexity over residues 327-348 (SSTP…SSSG), 364-398 (QRNN…TPTA), and 406-427 (PSHS…HPPA). The segment covering 430–458 (SDGDDEDEDEEEDEEEDELEDTEDDTDEE) has biased composition (acidic residues). The residue at position 541 (S541) is a Phosphoserine. The span at 544 to 558 (SEPHRDQGETIKSTE) shows a compositional bias: basic and acidic residues. The segment covering 562 to 575 (QQQQQQEQQTLQSS) has biased composition (low complexity). Composition is skewed to basic residues over residues 576–601 (RQRH…HHST) and 609–627 (QPHH…GRKR). The span at 780–798 (NNTIDNPSSSNTSSSSATT) shows a compositional bias: low complexity. S807 carries the phosphoserine modification. Residues 822–878 (VHQQEQEMQQQQDHQQQQHQHQVQVQLQRQRNNSVGSNTPSSASSTSSSSEQNSPVS) show a composition bias toward low complexity. An FYVE-type zinc finger spans residues 917 to 977 (DGKAPRCMSC…VCRDCYVREV (61 aa)). C923, C926, C939, C942, C947, C950, C969, and C972 together coordinate Zn(2+).

Belongs to the lst-2 family.

Its function is as follows. Negative regulator of epidermal growth factor receptor (EGFR) signaling. This Drosophila persimilis (Fruit fly) protein is Lateral signaling target protein 2 homolog.